Consider the following 307-residue polypeptide: MAEISDLDRQIEQLRRCELIKESEVKALCAKAREILVEESNVQRVDSPVTVCGDIHGQFYDLKELFRVGGDVPETNYLFMGDFVDRGFYSVETFLLLLALKVRYPDRITLIRGNHESRQITQVYGFYDECLRKYGSVTVWRYCTEIFDYLSLSAIIDGKIFCVHGGLSPSIQTLDQIRTIDRKQEVPHDGPMCDLLWSDPEDTTGWGVSPRGAGYLFGSDVVAQFNAANDIDMTCRAHQLVMEGYKWHFNETVLTVWSAPNYCYRCGNVAAILELDEHLQKDFIIFEAAPQETRGIPSKKPVADYFL.

Ala-2 carries the N-acetylalanine modification. The Mn(2+) site is built by Asp-54, His-56, Asp-82, and Asn-114. His-115 (proton donor) is an active-site residue. The Mn(2+) site is built by His-164 and His-238. Leucine methyl ester is present on Leu-307.

It belongs to the PPP phosphatase family. PP-4 (PP-X) subfamily. In terms of assembly, serine/threonine-protein phosphatase 4 (PP4) occurs in different assemblies of the catalytic and one or more regulatory subunits. Component of the PP4 complexes PPP4C-PPP4R1, PPP4C-PPP4R2, PPP4C-PPP4R2-PPP4R3A, PPP4C-PPP4R2-PPP4R3B and PPP4C-PPP4R4. The PPP4C-PPP4R2 complex appears to be a tetramer composed of 2 molecules of PPP4C and 2 molecules of PPP4R2. Interacts with REL, NFKB1/p50 and RELA. Interacts with SMN1 and GEMIN4. Interacts with IRS4 (phosphorylated). Interacts with SMEK1/PPP4R3A; the interaction requires PP4R2. Interacts with HDAC3. Mn(2+) is required as a cofactor. In terms of processing, methylation at the C-terminal Leu-307 is critical for interactions with regulatory subunits and functions in DNA repair.

Its subcellular location is the cytoplasm. It is found in the nucleus. The protein localises to the cytoskeleton. The protein resides in the microtubule organizing center. It localises to the centrosome. The enzyme catalyses O-phospho-L-seryl-[protein] + H2O = L-seryl-[protein] + phosphate. It carries out the reaction O-phospho-L-threonyl-[protein] + H2O = L-threonyl-[protein] + phosphate. Functionally, protein phosphatase that is involved in many processes such as microtubule organization at centrosomes, maturation of spliceosomal snRNPs, apoptosis, DNA repair, tumor necrosis factor (TNF)-alpha signaling, activation of c-Jun N-terminal kinase MAPK8, regulation of histone acetylation, DNA damage checkpoint signaling, NF-kappa-B activation and cell migration. The PPP4C-PPP4R1 PP4 complex may play a role in dephosphorylation and regulation of HDAC3. The PPP4C-PPP4R2-PPP4R3A PP4 complex specifically dephosphorylates H2AX phosphorylated on Ser-140 (gamma-H2AX) generated during DNA replication and required for DNA DSB repair. Dephosphorylates NDEL1 at CDK1 phosphorylation sites and negatively regulates CDK1 activity in interphase. In response to DNA damage, catalyzes RPA2 dephosphorylation, an essential step for DNA repair since it allows the efficient RPA2-mediated recruitment of RAD51 to chromatin. The chain is Serine/threonine-protein phosphatase 4 catalytic subunit (Ppp4c) from Rattus norvegicus (Rat).